Reading from the N-terminus, the 320-residue chain is Phosphate acetyltransferase (320 aa).

Belongs to the phosphate acetyltransferase and butyryltransferase family.

The protein resides in the cytoplasm. It carries out the reaction acetyl-CoA + phosphate = acetyl phosphate + CoA. Its pathway is metabolic intermediate biosynthesis; acetyl-CoA biosynthesis; acetyl-CoA from acetate: step 2/2. This chain is Phosphate acetyltransferase (pta), found in Mycoplasma genitalium (strain ATCC 33530 / DSM 19775 / NCTC 10195 / G37) (Mycoplasmoides genitalium).